The primary structure comprises 522 residues: 2-isopropylmalate synthase (522 aa).

One can recognise a Pyruvate carboxyltransferase domain in the interval V5–H267. Mn(2+) is bound by residues D14, H202, H204, and N238. Residues Q392–V522 form a regulatory domain region.

This sequence belongs to the alpha-IPM synthase/homocitrate synthase family. LeuA type 1 subfamily. As to quaternary structure, homodimer. Requires Mn(2+) as cofactor.

It localises to the cytoplasm. It catalyses the reaction 3-methyl-2-oxobutanoate + acetyl-CoA + H2O = (2S)-2-isopropylmalate + CoA + H(+). It functions in the pathway amino-acid biosynthesis; L-leucine biosynthesis; L-leucine from 3-methyl-2-oxobutanoate: step 1/4. In terms of biological role, catalyzes the condensation of the acetyl group of acetyl-CoA with 3-methyl-2-oxobutanoate (2-ketoisovalerate) to form 3-carboxy-3-hydroxy-4-methylpentanoate (2-isopropylmalate). This Shewanella sp. (strain MR-7) protein is 2-isopropylmalate synthase.